The primary structure comprises 277 residues: Small ribosomal subunit protein uS3 (277 aa).

One can recognise a KH type-2 domain in the interval 38–106 (IRRLLATGLE…QVQLNILEVK (69 aa)). Positions 217 to 277 (AGVEAGRGAP…SAPSAETTES (61 aa)) are disordered. A compositionally biased stretch (basic and acidic residues) spans 225 to 235 (APDRPRRERPA). Low complexity predominate over residues 242–261 (SGSSGTTATSTEAGRAAAET).

Belongs to the universal ribosomal protein uS3 family. In terms of assembly, part of the 30S ribosomal subunit. Forms a tight complex with proteins S10 and S14.

Its function is as follows. Binds the lower part of the 30S subunit head. Binds mRNA in the 70S ribosome, positioning it for translation. In Mycobacteroides abscessus (strain ATCC 19977 / DSM 44196 / CCUG 20993 / CIP 104536 / JCM 13569 / NCTC 13031 / TMC 1543 / L948) (Mycobacterium abscessus), this protein is Small ribosomal subunit protein uS3.